Consider the following 211-residue polypeptide: Envelope protein UL45 homolog (211 aa).

At 1–46 the chain is on the intravirion side; that stretch reads MMSPTPEDDRDLVVVRGRLRMMDNGAEHDRERRSYTAWPHLCCGCT. The helical; Signal-anchor for type II membrane protein transmembrane segment at 47–67 threads the bilayer; sequence IGIILTMFVIATTLLLASLFA. Residues 68 to 211 lie on the Virion surface side of the membrane; the sequence is FSYMSLESGT…SSILSNAIMK (144 aa). Asn96 and Asn133 each carry an N-linked (GlcNAc...) asparagine; by host glycan.

The protein belongs to the herpesviridae HHV-1 UL45 family.

The protein resides in the virion membrane. In Gallid herpesvirus 2 (strain Chicken/Md5/ATCC VR-987) (GaHV-2), this protein is Envelope protein UL45 homolog (UL45H).